Consider the following 491-residue polypeptide: uncharacterized protein (491 aa).

266–273 (GIQGTGKS) serves as a coordination point for ATP.

The protein belongs to the AAA ATPase family. Highly divergent.

The protein localises to the plastid. It is found in the chloroplast. This is an uncharacterized protein from Porphyra purpurea (Red seaweed).